Here is a 111-residue protein sequence, read N- to C-terminus: Cytochrome c (111 aa).

At alanine 1 the chain carries N-acetylalanine. The heme c site is built by cysteine 22, cysteine 25, and histidine 26. Lysine 80 is modified (N6,N6,N6-trimethyllysine). Methionine 88 lines the heme c pocket. An N6,N6,N6-trimethyllysine modification is found at lysine 94.

The protein belongs to the cytochrome c family. In terms of processing, binds 1 heme c group covalently per subunit.

It is found in the mitochondrion intermembrane space. Functionally, electron carrier protein. The oxidized form of the cytochrome c heme group can accept an electron from the heme group of the cytochrome c1 subunit of cytochrome reductase. Cytochrome c then transfers this electron to the cytochrome oxidase complex, the final protein carrier in the mitochondrial electron-transport chain. This Gossypium barbadense (Sea Island cotton) protein is Cytochrome c.